Reading from the N-terminus, the 245-residue chain is 1-(5-phosphoribosyl)-5-[(5-phosphoribosylamino)methylideneamino] imidazole-4-carboxamide isomerase (245 aa).

Catalysis depends on D7, which acts as the Proton acceptor. Catalysis depends on D129, which acts as the Proton donor.

Belongs to the HisA/HisF family.

Its subcellular location is the cytoplasm. The catalysed reaction is 1-(5-phospho-beta-D-ribosyl)-5-[(5-phospho-beta-D-ribosylamino)methylideneamino]imidazole-4-carboxamide = 5-[(5-phospho-1-deoxy-D-ribulos-1-ylimino)methylamino]-1-(5-phospho-beta-D-ribosyl)imidazole-4-carboxamide. It functions in the pathway amino-acid biosynthesis; L-histidine biosynthesis; L-histidine from 5-phospho-alpha-D-ribose 1-diphosphate: step 4/9. The polypeptide is 1-(5-phosphoribosyl)-5-[(5-phosphoribosylamino)methylideneamino] imidazole-4-carboxamide isomerase (Shewanella halifaxensis (strain HAW-EB4)).